A 363-amino-acid polypeptide reads, in one-letter code: Protein-arginine kinase (363 aa).

Positions 24–254 (IVLSSRIRLA…AQLIEQERSA (231 aa)) constitute a Phosphagen kinase C-terminal domain. 27–31 (SSRIR) lines the ATP pocket. Phosphoarginine; by autocatalysis occurs at positions 29, 40, and 86. Residues His-92, Arg-125, and 176–180 (RASVM) each bind ATP. Arg-190 is subject to Phosphoarginine; by autocatalysis. ATP is bound at residue 207-212 (RGIYGE). Residues Arg-255, Arg-269, and Arg-272 each carry the phosphoarginine; by autocatalysis modification. The RDXXRA motif of the pArg binding pocket involved in allosteric regulation signature appears at 337–342 (RDIRRA). Residue Arg-346 is modified to Phosphoarginine; by autocatalysis.

It belongs to the ATP:guanido phosphotransferase family. Interacts with CtsR in its autophosphorylated form. Interacts with McsA in nonstressed as well as in heat-stressed cells, whereas strongly interacts with ClpC only in nonstressed cells. In terms of processing, autophosphorylated on Arg residues. Phosphorylation on Arg-40 and Arg-86 are up-regulated upon stress conditions.

It is found in the cytoplasm. The catalysed reaction is L-arginyl-[protein] + ATP = N(omega)-phospho-L-arginyl-[protein] + ADP + H(+). With respect to regulation, appears to be allosterically activated by the binding of pArg-containing polypeptides to the pArg-binding pocket localized in the C-terminal domain of McsB. The McsB kinase is inhibited in nonstressed cells by direct interaction with ClpC; upon heat exposure, the interaction of McsB with ClpC is dramatically decreased, leading to McsB release and activation during heat stress. Its kinase activity is counteracted by the protein-arginine-phosphatase YwlE in vivo. Requires McsA for full kinase activity. Catalyzes the specific phosphorylation of arginine residues in a large number of proteins. Is part of the bacterial stress response system, where it is involved in regulating the global heat shock repressor CtsR; phosphorylates arginine residues in the winged helix-turn-helix domain of CtsR, thereby preventing its binding to DNA and consequently inducing the expression of repressed genes. The transcriptional repressor HrcA, the chaperone GroEL, the unfoldase ClpC, together with several ribosomal subunits, represent other physiological targets of McsB under stress conditions. Protein arginine phosphorylation has a physiologically important role and is involved in the regulation of many critical cellular processes, such as protein homeostasis, motility, competence, and stringent and stress responses, by regulating gene expression and protein activity. Functions as an adapter whose kinase activity is required for ClpCP-mediated degradation of CtsR during heat stress. Is required for the delocalization of competence proteins from the cell poles, probably via a role in the degradation of anchor proteins. This is Protein-arginine kinase from Bacillus subtilis (strain 168).